The following is a 143-amino-acid chain: Probable glycine cleavage system H protein (143 aa).

Residues 36-118 (VATVGITDFA…YGEGWIFKIK (83 aa)) form the Lipoyl-binding domain. The residue at position 77 (Lys77) is an N6-lipoyllysine.

Belongs to the GcvH family. As to quaternary structure, the glycine cleavage system is composed of four proteins: P, T, L and H. The cofactor is (R)-lipoate.

In terms of biological role, the glycine cleavage system catalyzes the degradation of glycine. The H protein shuttles the methylamine group of glycine from the P protein to the T protein. The chain is Probable glycine cleavage system H protein from Aeropyrum pernix (strain ATCC 700893 / DSM 11879 / JCM 9820 / NBRC 100138 / K1).